A 103-amino-acid chain; its full sequence is Co-chaperonin GroES (103 aa).

This sequence belongs to the GroES chaperonin family. In terms of assembly, heptamer of 7 subunits arranged in a ring. Interacts with the chaperonin GroEL.

The protein localises to the cytoplasm. In terms of biological role, together with the chaperonin GroEL, plays an essential role in assisting protein folding. The GroEL-GroES system forms a nano-cage that allows encapsulation of the non-native substrate proteins and provides a physical environment optimized to promote and accelerate protein folding. GroES binds to the apical surface of the GroEL ring, thereby capping the opening of the GroEL channel. This is Co-chaperonin GroES from Prochlorococcus marinus (strain MIT 9515).